Consider the following 367-residue polypeptide: Phosphoribosylaminoimidazole-succinocarboxamide synthase (367 aa).

This sequence belongs to the SAICAR synthetase family.

The catalysed reaction is 5-amino-1-(5-phospho-D-ribosyl)imidazole-4-carboxylate + L-aspartate + ATP = (2S)-2-[5-amino-1-(5-phospho-beta-D-ribosyl)imidazole-4-carboxamido]succinate + ADP + phosphate + 2 H(+). Its pathway is purine metabolism; IMP biosynthesis via de novo pathway; 5-amino-1-(5-phospho-D-ribosyl)imidazole-4-carboxamide from 5-amino-1-(5-phospho-D-ribosyl)imidazole-4-carboxylate: step 1/2. The protein is Phosphoribosylaminoimidazole-succinocarboxamide synthase of Aliivibrio fischeri (strain MJ11) (Vibrio fischeri).